Consider the following 91-residue polypeptide: Large ribosomal subunit protein eL43 (91 aa).

The C4-type zinc-finger motif lies at 39 to 60; that stretch reads CPFCGKDAMRRGAVGIWNCSKC.

Belongs to the eukaryotic ribosomal protein eL43 family.

In Ostertagia ostertagi (Brown stomach worm), this protein is Large ribosomal subunit protein eL43 (rpl-37a).